Here is a 239-residue protein sequence, read N- to C-terminus: Lactose-binding lectin-2 (239 aa).

Glu-122 and Asp-124 together coordinate Mn(2+). Residues Asp-124, Tyr-126, Asn-128, and Asp-131 each coordinate Ca(2+). Residues Asp-131 and His-137 each coordinate Mn(2+).

Belongs to the leguminous lectin family. As to quaternary structure, homotetramer. Seed.

The protein resides in the vacuole. The protein localises to the aleurone grain. Lactose-binding lectin. Also binds derivatives of galactose, glucose, lactose, and mannose. Binds O-glycoproteins such as mucins more strongly than N-glycoproteins. Shows agglutinating activity towards rabbit erythrocytes. The sequence is that of Lactose-binding lectin-2 from Cymbosema roseum (Dioclea purpurea).